Reading from the N-terminus, the 423-residue chain is Glucose-1-phosphate adenylyltransferase (423 aa).

Residues Tyr108, Gly173, Glu188–Lys189, and Ser207 each bind alpha-D-glucose 1-phosphate.

The protein belongs to the bacterial/plant glucose-1-phosphate adenylyltransferase family. Homotetramer.

It catalyses the reaction alpha-D-glucose 1-phosphate + ATP + H(+) = ADP-alpha-D-glucose + diphosphate. The protein operates within glycan biosynthesis; glycogen biosynthesis. Involved in the biosynthesis of ADP-glucose, a building block required for the elongation reactions to produce glycogen. Catalyzes the reaction between ATP and alpha-D-glucose 1-phosphate (G1P) to produce pyrophosphate and ADP-Glc. The polypeptide is Glucose-1-phosphate adenylyltransferase (Francisella tularensis subsp. tularensis (strain WY96-3418)).